Reading from the N-terminus, the 159-residue chain is MNISIISIGKLKEKYLKQGIAEYLKRLSAYAKVEVIELPDEKAPENLSEAEMLIVKEKEGIRILDKISDDTHVIALAIEGKQKSSEEFAVSLDRLATYGKSKVAFVIGGSLGLSSEVIKRSNESLSFSKMTLPHQLMRLVLLEQVYRAFRINRGEPYHK.

S-adenosyl-L-methionine is bound by residues L76, G108, and 127 to 132; that span reads FSKMTL.

It belongs to the RNA methyltransferase RlmH family. As to quaternary structure, homodimer.

It localises to the cytoplasm. The catalysed reaction is pseudouridine(1915) in 23S rRNA + S-adenosyl-L-methionine = N(3)-methylpseudouridine(1915) in 23S rRNA + S-adenosyl-L-homocysteine + H(+). Specifically methylates the pseudouridine at position 1915 (m3Psi1915) in 23S rRNA. In Bacillus cereus (strain ATCC 10987 / NRS 248), this protein is Ribosomal RNA large subunit methyltransferase H.